A 229-amino-acid polypeptide reads, in one-letter code: Clathrin light chain B (229 aa).

Composition is skewed to low complexity over residues 1 to 17 and 45 to 58; these read MAED…GAPE and GAPA…AQPG. The interval 1-80 is disordered; that stretch reads MAEDFGFFSS…TVNGDVFQEA (80 aa). Residues S11 and S13 each carry the phosphoserine modification. Residues 93-155 are involved in binding clathrin heavy chain; sequence ADRLTQEPES…QVEKNKINNR (63 aa). Phosphothreonine is present on T187. C199 and C209 are joined by a disulfide. K204 carries the N6-acetyllysine modification. S217 carries the post-translational modification Phosphoserine.

The protein belongs to the clathrin light chain family. As to quaternary structure, clathrin coats are formed from molecules containing 3 heavy chains and 3 light chains. Interacts (via N-terminus) with HIP1. Interacts with HIP1R.

It localises to the cytoplasmic vesicle membrane. Its subcellular location is the membrane. The protein localises to the coated pit. In terms of biological role, clathrin is the major protein of the polyhedral coat of coated pits and vesicles. In Rattus norvegicus (Rat), this protein is Clathrin light chain B (Cltb).